Reading from the N-terminus, the 235-residue chain is tRNA (guanine-N(1)-)-methyltransferase (235 aa).

Residues glycine 112 and 132–137 (IGDYVI) contribute to the S-adenosyl-L-methionine site.

It belongs to the RNA methyltransferase TrmD family. Homodimer.

The protein localises to the cytoplasm. It catalyses the reaction guanosine(37) in tRNA + S-adenosyl-L-methionine = N(1)-methylguanosine(37) in tRNA + S-adenosyl-L-homocysteine + H(+). In terms of biological role, specifically methylates guanosine-37 in various tRNAs. In Anaplasma marginale (strain Florida), this protein is tRNA (guanine-N(1)-)-methyltransferase.